We begin with the raw amino-acid sequence, 1801 residues long: Sperm flagellar protein 2 (1801 aa).

The Calponin-homology (CH) domain maps to 1–105 (MSEILCQWLN…LLYQLYIALQ (105 aa)). Coiled coils occupy residues 176 to 260 (EKFE…KDLQ) and 321 to 395 (AHEA…TKQA). The interval 632-659 (QDKNELTDTQVPGEAAPQKEGTKSSDFE) is disordered. 2 coiled-coil regions span residues 722–748 (NQAK…KAQM) and 869–895 (ATEV…SAVS). Composition is skewed to basic and acidic residues over residues 883–892 (LEEKETEKKS) and 909–918 (EAEKEKEVHQ). Residues 883-949 (LEEKETEKKS…KISVKKSPID (67 aa)) are disordered. Residues 1051 to 1077 (EDLWEDEETKAELHQRVNDLRDRLWDI) are a coiled coil. Basic and acidic residues-rich tracts occupy residues 1233 to 1250 (RLAE…KEKS) and 1261 to 1295 (KEKE…AEKK). 3 disordered regions span residues 1233-1304 (RLAE…SPVV), 1651-1695 (KTSI…NANT), and 1781-1801 (SEHA…DEKK). A coiled-coil region spans residues 1252-1286 (QSGTNKKAKKEKEQAKKEKEQAKKEKEQAKKEKEP). The interval 1305-1657 (EVSPVTITPE…TAEKTSISSV (353 aa)) is interaction with IFT20. The stretch at 1665-1695 (EAEENSTREELKEEKDERDQKEEEIPENANT) forms a coiled coil. The span at 1669-1687 (NSTREELKEEKDERDQKEE) shows a compositional bias: basic and acidic residues.

In terms of assembly, interacts (via C-terminus) with IFT20. Interacts with DYNC1I2. In terms of tissue distribution, predominantly expressed in ciliated tissues such as lung, trachea, testis, brain, and at lower levels in kidney and spleen.

The protein resides in the cell projection. It is found in the cilium. It localises to the flagellum. Its subcellular location is the cytoplasm. The protein localises to the golgi apparatus. Required for correct axoneme development in spermatozoa. Important for normal development of the manchette and sperm head morphology. Essential for male fertility. Plays a role in localization of the intraflagellar transport protein IFT20 to the manchette, suggesting function as an adapter for dynein-mediated protein transport during spermatogenesis. Also plays a role in bone growth where it seems to be required for normal osteoblast differentiation. This Rattus norvegicus (Rat) protein is Sperm flagellar protein 2 (Spef2).